The sequence spans 476 residues: Glycogen synthase (476 aa).

Residue Lys-15 coordinates ADP-alpha-D-glucose.

The protein belongs to the glycosyltransferase 1 family. Bacterial/plant glycogen synthase subfamily.

It catalyses the reaction [(1-&gt;4)-alpha-D-glucosyl](n) + ADP-alpha-D-glucose = [(1-&gt;4)-alpha-D-glucosyl](n+1) + ADP + H(+). It functions in the pathway glycan biosynthesis; glycogen biosynthesis. Functionally, synthesizes alpha-1,4-glucan chains using ADP-glucose. This Haemophilus influenzae (strain 86-028NP) protein is Glycogen synthase.